The primary structure comprises 175 residues: 3-hydroxydecanoyl-[acyl-carrier-protein] dehydratase (175 aa).

The active site involves H71.

It belongs to the thioester dehydratase family. FabA subfamily. In terms of assembly, homodimer.

Its subcellular location is the cytoplasm. The catalysed reaction is a (3R)-hydroxyacyl-[ACP] = a (2E)-enoyl-[ACP] + H2O. The enzyme catalyses (3R)-hydroxydecanoyl-[ACP] = (2E)-decenoyl-[ACP] + H2O. It catalyses the reaction (2E)-decenoyl-[ACP] = (3Z)-decenoyl-[ACP]. It functions in the pathway lipid metabolism; fatty acid biosynthesis. Necessary for the introduction of cis unsaturation into fatty acids. Catalyzes the dehydration of (3R)-3-hydroxydecanoyl-ACP to E-(2)-decenoyl-ACP and then its isomerization to Z-(3)-decenoyl-ACP. Can catalyze the dehydratase reaction for beta-hydroxyacyl-ACPs with saturated chain lengths up to 16:0, being most active on intermediate chain length. The sequence is that of 3-hydroxydecanoyl-[acyl-carrier-protein] dehydratase from Rhodopseudomonas palustris (strain BisB5).